A 222-amino-acid polypeptide reads, in one-letter code: Deoxyribose-phosphate aldolase (222 aa).

The Proton donor/acceptor role is filled by Asp-89. Lys-152 functions as the Schiff-base intermediate with acetaldehyde in the catalytic mechanism. Residue Lys-181 is the Proton donor/acceptor of the active site.

It belongs to the DeoC/FbaB aldolase family. DeoC type 1 subfamily.

Its subcellular location is the cytoplasm. The catalysed reaction is 2-deoxy-D-ribose 5-phosphate = D-glyceraldehyde 3-phosphate + acetaldehyde. It participates in carbohydrate degradation; 2-deoxy-D-ribose 1-phosphate degradation; D-glyceraldehyde 3-phosphate and acetaldehyde from 2-deoxy-alpha-D-ribose 1-phosphate: step 2/2. In terms of biological role, catalyzes a reversible aldol reaction between acetaldehyde and D-glyceraldehyde 3-phosphate to generate 2-deoxy-D-ribose 5-phosphate. The protein is Deoxyribose-phosphate aldolase of Alkaliphilus oremlandii (strain OhILAs) (Clostridium oremlandii (strain OhILAs)).